Consider the following 201-residue polypeptide: Adenylyl-sulfate kinase (201 aa).

35-42 (GLSGSGKS) is an ATP binding site. Serine 109 acts as the Phosphoserine intermediate in catalysis.

The protein belongs to the APS kinase family.

It carries out the reaction adenosine 5'-phosphosulfate + ATP = 3'-phosphoadenylyl sulfate + ADP + H(+). The protein operates within sulfur metabolism; hydrogen sulfide biosynthesis; sulfite from sulfate: step 2/3. In terms of biological role, catalyzes the synthesis of activated sulfate. The chain is Adenylyl-sulfate kinase from Escherichia coli (strain ATCC 8739 / DSM 1576 / NBRC 3972 / NCIMB 8545 / WDCM 00012 / Crooks).